The chain runs to 376 residues: Hydroxylysine kinase (376 aa).

Asp-229 (proton acceptor) is an active-site residue.

It belongs to the aminoglycoside phosphotransferase family.

Its subcellular location is the cytoplasm. The enzyme catalyses (5R)-5-hydroxy-L-lysine + GTP = (5R)-5-phosphooxy-L-lysine + GDP + H(+). Its function is as follows. Catalyzes the GTP-dependent phosphorylation of 5-hydroxy-L-lysine. In Mus musculus (Mouse), this protein is Hydroxylysine kinase (Hykk).